Reading from the N-terminus, the 311-residue chain is Lipoyl synthase (311 aa).

[4Fe-4S] cluster is bound by residues C55, C60, C66, C81, C85, C88, and S292. The region spanning 67–281 (WEDREATFLI…ARFAEGLGFA (215 aa)) is the Radical SAM core domain.

The protein belongs to the radical SAM superfamily. Lipoyl synthase family. Requires [4Fe-4S] cluster as cofactor.

Its subcellular location is the cytoplasm. It catalyses the reaction [[Fe-S] cluster scaffold protein carrying a second [4Fe-4S](2+) cluster] + N(6)-octanoyl-L-lysyl-[protein] + 2 oxidized [2Fe-2S]-[ferredoxin] + 2 S-adenosyl-L-methionine + 4 H(+) = [[Fe-S] cluster scaffold protein] + N(6)-[(R)-dihydrolipoyl]-L-lysyl-[protein] + 4 Fe(3+) + 2 hydrogen sulfide + 2 5'-deoxyadenosine + 2 L-methionine + 2 reduced [2Fe-2S]-[ferredoxin]. The protein operates within protein modification; protein lipoylation via endogenous pathway; protein N(6)-(lipoyl)lysine from octanoyl-[acyl-carrier-protein]: step 2/2. In terms of biological role, catalyzes the radical-mediated insertion of two sulfur atoms into the C-6 and C-8 positions of the octanoyl moiety bound to the lipoyl domains of lipoate-dependent enzymes, thereby converting the octanoylated domains into lipoylated derivatives. This chain is Lipoyl synthase, found in Mycobacterium bovis (strain ATCC BAA-935 / AF2122/97).